A 177-amino-acid chain; its full sequence is uncharacterized protein (177 aa).

The protein localises to the plastid. Its subcellular location is the chloroplast. This is an uncharacterized protein from Chlorella vulgaris (Green alga).